The sequence spans 224 residues: Toxin coregulated pilin (224 aa).

The propeptide at 1 to 25 is atypical leader sequence; the sequence is MQLLKQLFKKKFVKEEHDKKTGQEG. Met-26 is modified (N-methylmethionine). Residues 26–46 traverse the membrane as a helical segment; it reads MTLLEVIIVLGIMGVVSAGVV. An intrachain disulfide couples Cys-145 to Cys-211.

It is found in the fimbrium. The protein resides in the membrane. Major component of the toxin co-regulated pilus (tcp) which is a type IV pilus essential for bacterial aggregation and subsequent colonization in the host small intestine. In Vibrio cholerae, this protein is Toxin coregulated pilin (tcpA).